A 128-amino-acid chain; its full sequence is Probable 4-amino-4-deoxy-L-arabinose-phosphoundecaprenol flippase subunit ArnF (128 aa).

The Cytoplasmic portion of the chain corresponds to 1–5 (MKGYG). Residues 6 to 26 (WGIGSVVLVTVAQLILKWGMM) traverse the membrane as a helical segment. Residues 27-47 (NTPLMSLADINGQFVFNHLPQ) are Periplasmic-facing. A helical transmembrane segment spans residues 48 to 68 (FIAVICGLAGYALSMLCWFFA). The Cytoplasmic portion of the chain corresponds to 69-77 (LRYLPLNRA). A helical membrane pass occupies residues 78–98 (YPLLSLSYALVYLGAVSLPWF). Topologically, residues 99-101 (SES) are periplasmic. A helical transmembrane segment spans residues 102–122 (ATLLKTLGAGFILLGIWLINT). At 123-128 (KPIAKD) the chain is on the cytoplasmic side.

This sequence belongs to the ArnF family. In terms of assembly, heterodimer of ArnE and ArnF.

Its subcellular location is the cell inner membrane. The protein operates within bacterial outer membrane biogenesis; lipopolysaccharide biosynthesis. Translocates 4-amino-4-deoxy-L-arabinose-phosphoundecaprenol (alpha-L-Ara4N-phosphoundecaprenol) from the cytoplasmic to the periplasmic side of the inner membrane. The polypeptide is Probable 4-amino-4-deoxy-L-arabinose-phosphoundecaprenol flippase subunit ArnF (Yersinia enterocolitica serotype O:8 / biotype 1B (strain NCTC 13174 / 8081)).